The primary structure comprises 152 residues: Deoxyuridine 5'-triphosphate nucleotidohydrolase (152 aa).

Residues 72-74, N85, and 89-91 each bind substrate; these read RSG and TID.

The protein belongs to the dUTPase family. Mg(2+) is required as a cofactor.

It catalyses the reaction dUTP + H2O = dUMP + diphosphate + H(+). Its pathway is pyrimidine metabolism; dUMP biosynthesis; dUMP from dCTP (dUTP route): step 2/2. Its function is as follows. This enzyme is involved in nucleotide metabolism: it produces dUMP, the immediate precursor of thymidine nucleotides and it decreases the intracellular concentration of dUTP so that uracil cannot be incorporated into DNA. In Rhodopseudomonas palustris (strain BisB18), this protein is Deoxyuridine 5'-triphosphate nucleotidohydrolase.